The sequence spans 800 residues: MASLPAPPTPLGSCPRGRGGGRVVARPRRAGLACAARSCYRFRTDDDGVVDVAVSGEDGDGGGGGYAVSVEVPGTRGREGGLVLRASGSGEGVPLAPAAGGASLAAELSFDPTRAPFYLSFLLTDASGAEIRTHRKTSFRVPVGVGPGSPAPLGMSISGDGAVNFAVYSKNANAVSLYLYAAAVGGGGGDEPALEIDLDPYIHRTGNVWHVSLASVDGYVSYAFCCGGIRRPLLDPYAKVIGDFVSSNSVYDEGVTAPSMRCFASLAIAPSYNWGRDRHPRLPLEKLVVYRANVALFTKDRSSGLPDDAAGTFTGLSAKVEHFRSLGVNAILLEPVFPFHQVKGPYFPYHFFSPMNLYSSKGLSVSAIKSMKDMVRVMHRNGIEVLLEVVFTHTAEGESECQTISMRGIDNSSYYIANGIAGCKASILNCNHPVTQKLILDSLRHWVLDFHVDGFCFINAPFLVRGPGGEYLSRPPLLEAITFDPVLSMTKIIADPWSPLDISNVQFPFPHWKRWAEVNTRFSIDVRKFLKREALISDLATRLCGSGDLFSTRGPAFSFNHVSRNSGLSLVDLVSFSNDDLLSESSWNCGEEGPSENSAVLQTRLRQIRNFLFILFVSLGVPVLNMGDECGHSAAGSVSYKDRGPLNWRGMKTTFVKEVTGFISFLTALRSRRGDIFQRREFLKLENIHWYGSDLCEPGWDDPTSNFLCMHINAEVDEMAADSVRGDLYICFNANEESVSAALPALAEGSVWLRLVDTSLAFPGFFATESNPKVQQVPGLSSYHVEAHTCVLFESKSALA.

The segment covering 1–10 has biased composition (pro residues); it reads MASLPAPPTP. A disordered region spans residues 1-22; sequence MASLPAPPTPLGSCPRGRGGGR. Residues 1 to 34 constitute a chloroplast transit peptide; sequence MASLPAPPTPLGSCPRGRGGGRVVARPRRAGLAC.

Belongs to the glycosyl hydrolase 13 family. Forms a hetero-hexamer composed of five ISA1 and one ISA2. In terms of tissue distribution, highly expressed in developing endosperm and leaves.

The protein localises to the plastid. It localises to the chloroplast. It catalyses the reaction Hydrolysis of (1-&gt;6)-alpha-D-glucosidic branch linkages in glycogen, amylopectin and their beta-limit dextrins.. Functionally, starch-debranching enzyme involved in amylopectin biosynthesis in endosperm. Functions by removing excess branches or improper branches that interfere with the formation of double helices of the cluster chains of amylopectin and crystallization of starch. Works together with ISA1 as heterooligomer. The heterooligomer ISA1 and ISA2 possesses higher affinity than the ISA1 homooligomer for various branched polyglucans in vitro, but no marked differences exist in chain preferences for debranching of amylopectin and phytoglycogen between these forms. The polypeptide is Isoamylase 2, chloroplastic (Oryza sativa subsp. japonica (Rice)).